Reading from the N-terminus, the 666-residue chain is Endogenous retrovirus group K member 24 Gag polyprotein (666 aa).

Residue G2 is the site of N-myristoyl glycine attachment. Positions 165-264 are disordered; sequence GKGPELVGPS…APPSRQGSEL (100 aa). Over residues 232–247 the composition is skewed to pro residues; the sequence is GMPPAPQGRAPYPQPP. 2 CCHC-type zinc fingers span residues 544 to 561 and 580 to 597; these read GKCY…NCPV and DLCP…QCRS. The disordered stretch occupies residues 598–641; it reads KFDKNGQPLSGNEQRGQPQAPQQTGAFPIQPFVPQGFQGQQPPL. A compositionally biased stretch (polar residues) spans 604–622; sequence QPLSGNEQRGQPQAPQQTG. The span at 624–640 shows a compositional bias: low complexity; sequence FPIQPFVPQGFQGQQPP.

It belongs to the beta type-B retroviral Gag protein family. HERV class-II K(HML-2) gag subfamily. Post-translationally, myristoylation is essential for retroviral assembly. Alteration of the glycine residue leads to a block in the budding of particles and an accumulation of Gag inside the cell. Specific enzymatic cleavages may yield mature proteins.

Its subcellular location is the cell membrane. In terms of biological role, the products of the Gag polyproteins of infectious retroviruses perform highly complex orchestrated tasks during the assembly, budding, maturation, and infection stages of the viral replication cycle. During viral assembly, the proteins form membrane associations and self-associations that ultimately result in budding of an immature virion from the infected cell. Gag precursors also function during viral assembly to selectively bind and package two plus strands of genomic RNA. Endogenous Gag proteins may have kept, lost or modified their original function during evolution. The sequence is that of Endogenous retrovirus group K member 24 Gag polyprotein (ERVK-24) from Homo sapiens (Human).